The sequence spans 341 residues: Pre-mRNA-processing protein 45 (341 aa).

Disordered stretches follow at residues 1-31 (MFSSLLPKPKYSSHEPTSRIKLKKVRAHEKS), 181-226 (NYQE…EDQA), and 302-341 (EQHEKENKLKELADIARSKKLNNKRPPNGDYDDVKKKTKY). A compositionally biased stretch (basic residues) spans 192–201 (FKLRKNRHKN). Positions 302–318 (EQHEKENKLKELADIAR) are enriched in basic and acidic residues.

This sequence belongs to the SNW family. Associated with the spliceosome.

It is found in the nucleus. In terms of biological role, involved in pre-mRNA splicing. The polypeptide is Pre-mRNA-processing protein 45 (PRP45) (Debaryomyces hansenii (strain ATCC 36239 / CBS 767 / BCRC 21394 / JCM 1990 / NBRC 0083 / IGC 2968) (Yeast)).